The primary structure comprises 86 residues: Large ribosomal subunit protein bL31 (86 aa).

The Zn(2+) site is built by C16, C18, C38, and C41.

The protein belongs to the bacterial ribosomal protein bL31 family. Type A subfamily. Part of the 50S ribosomal subunit. Requires Zn(2+) as cofactor.

Binds the 23S rRNA. The protein is Large ribosomal subunit protein bL31 of Acidothermus cellulolyticus (strain ATCC 43068 / DSM 8971 / 11B).